A 259-amino-acid polypeptide reads, in one-letter code: Global transcriptional regulator CodY (259 aa).

Positions 1 to 155 (MNLLEKTRKI…GATVVGMEIL (155 aa)) are GAF domain. The H-T-H motif DNA-binding region spans 203 to 222 (ASKIADRVGITRSVIVNALR). The residue at position 215 (S215) is a Phosphoserine.

It belongs to the CodY family.

It localises to the cytoplasm. Its function is as follows. DNA-binding global transcriptional regulator which is involved in the adaptive response to starvation and acts by directly or indirectly controlling the expression of numerous genes in response to nutrient availability. During rapid exponential growth, CodY is highly active and represses genes whose products allow adaptation to nutrient depletion. The sequence is that of Global transcriptional regulator CodY from Anoxybacillus flavithermus (strain DSM 21510 / WK1).